Here is a 646-residue protein sequence, read N- to C-terminus: Hypoxia up-regulated protein 1 (646 aa).

A signal peptide spans 1–22 (MRPLVCVLWMFLFALLSSHTES). The tract at residues 572-646 (LFGGGSSVSE…KEEEKAEPQE (75 aa)) is disordered. Residues 590-610 (VQEEDEVPTEPTKEEEQESAD) are compositionally biased toward acidic residues. Over residues 611 to 646 (PADKQQDKENNKEKGTSATNEKEEGKKEEEKAEPQE) the composition is skewed to basic and acidic residues.

The protein belongs to the heat shock protein 70 family.

The protein resides in the endoplasmic reticulum lumen. Functionally, has a pivotal role in cytoprotective cellular mechanisms triggered by oxygen deprivation. May play a role as a molecular chaperone and participate in protein folding. This chain is Hypoxia up-regulated protein 1 (hyou1), found in Xenopus laevis (African clawed frog).